The primary structure comprises 199 residues: Adenosylcobinamide-GDP ribazoletransferase (199 aa).

A run of 2 helical transmembrane segments spans residues 2–22 and 61–81; these read LAGG…VFAV and IAAV…VAAL.

Belongs to the CobS family. Requires Mg(2+) as cofactor.

The protein localises to the cell membrane. It catalyses the reaction alpha-ribazole + adenosylcob(III)inamide-GDP = adenosylcob(III)alamin + GMP + H(+). The catalysed reaction is alpha-ribazole 5'-phosphate + adenosylcob(III)inamide-GDP = adenosylcob(III)alamin 5'-phosphate + GMP + H(+). It participates in cofactor biosynthesis; adenosylcobalamin biosynthesis; adenosylcobalamin from cob(II)yrinate a,c-diamide: step 7/7. Joins adenosylcobinamide-GDP and alpha-ribazole to generate adenosylcobalamin (Ado-cobalamin). Also synthesizes adenosylcobalamin 5'-phosphate from adenosylcobinamide-GDP and alpha-ribazole 5'-phosphate. In Halobacterium salinarum (strain ATCC 700922 / JCM 11081 / NRC-1) (Halobacterium halobium), this protein is Adenosylcobinamide-GDP ribazoletransferase.